Here is a 793-residue protein sequence, read N- to C-terminus: Phenylalanine--tRNA ligase beta subunit (793 aa).

Residues 40–159 enclose the tRNA-binding domain; the sequence is SKLNTKLVIG…MDEMVGREIS (120 aa). The B5 domain occupies 401–476; the sequence is NYDNVYSITL…RLYGYDNIIE (76 aa). 4 residues coordinate Mg(2+): Asp454, Asp460, Glu463, and Glu464. An FDX-ACB domain is found at 701-793; sequence SKFQKSTRDI…NLKELKVKVR (93 aa).

It belongs to the phenylalanyl-tRNA synthetase beta subunit family. Type 1 subfamily. Tetramer of two alpha and two beta subunits. It depends on Mg(2+) as a cofactor.

The protein localises to the cytoplasm. It catalyses the reaction tRNA(Phe) + L-phenylalanine + ATP = L-phenylalanyl-tRNA(Phe) + AMP + diphosphate + H(+). In Mesoplasma florum (strain ATCC 33453 / NBRC 100688 / NCTC 11704 / L1) (Acholeplasma florum), this protein is Phenylalanine--tRNA ligase beta subunit.